A 647-amino-acid chain; its full sequence is Threonine--tRNA ligase (647 aa).

The TGS domain occupies 1 to 63 (MEVRVEGQMV…PAGCTGIEPV (63 aa)). Residues 244–535 (DHRKLGRELS…LVENFAGALP (292 aa)) are catalytic. Zn(2+) contacts are provided by Cys336, His387, and His512.

It belongs to the class-II aminoacyl-tRNA synthetase family. In terms of assembly, homodimer. It depends on Zn(2+) as a cofactor.

The protein localises to the cytoplasm. It catalyses the reaction tRNA(Thr) + L-threonine + ATP = L-threonyl-tRNA(Thr) + AMP + diphosphate + H(+). Its function is as follows. Catalyzes the attachment of threonine to tRNA(Thr) in a two-step reaction: L-threonine is first activated by ATP to form Thr-AMP and then transferred to the acceptor end of tRNA(Thr). Also edits incorrectly charged L-seryl-tRNA(Thr). In Desulfovibrio desulfuricans (strain ATCC 27774 / DSM 6949 / MB), this protein is Threonine--tRNA ligase.